The sequence spans 423 residues: Gamma-glutamyl phosphate reductase (423 aa).

It belongs to the gamma-glutamyl phosphate reductase family.

The protein resides in the cytoplasm. The catalysed reaction is L-glutamate 5-semialdehyde + phosphate + NADP(+) = L-glutamyl 5-phosphate + NADPH + H(+). It participates in amino-acid biosynthesis; L-proline biosynthesis; L-glutamate 5-semialdehyde from L-glutamate: step 2/2. In terms of biological role, catalyzes the NADPH-dependent reduction of L-glutamate 5-phosphate into L-glutamate 5-semialdehyde and phosphate. The product spontaneously undergoes cyclization to form 1-pyrroline-5-carboxylate. The chain is Gamma-glutamyl phosphate reductase from Paraburkholderia phytofirmans (strain DSM 17436 / LMG 22146 / PsJN) (Burkholderia phytofirmans).